Here is a 106-residue protein sequence, read N- to C-terminus: Pyrimidine/purine nucleoside phosphorylase (106 aa).

It belongs to the nucleoside phosphorylase PpnP family.

The enzyme catalyses a purine D-ribonucleoside + phosphate = a purine nucleobase + alpha-D-ribose 1-phosphate. The catalysed reaction is adenosine + phosphate = alpha-D-ribose 1-phosphate + adenine. It carries out the reaction cytidine + phosphate = cytosine + alpha-D-ribose 1-phosphate. It catalyses the reaction guanosine + phosphate = alpha-D-ribose 1-phosphate + guanine. The enzyme catalyses inosine + phosphate = alpha-D-ribose 1-phosphate + hypoxanthine. The catalysed reaction is thymidine + phosphate = 2-deoxy-alpha-D-ribose 1-phosphate + thymine. It carries out the reaction uridine + phosphate = alpha-D-ribose 1-phosphate + uracil. It catalyses the reaction xanthosine + phosphate = alpha-D-ribose 1-phosphate + xanthine. In terms of biological role, catalyzes the phosphorolysis of diverse nucleosides, yielding D-ribose 1-phosphate and the respective free bases. Can use uridine, adenosine, guanosine, cytidine, thymidine, inosine and xanthosine as substrates. Also catalyzes the reverse reactions. This Burkholderia vietnamiensis (strain G4 / LMG 22486) (Burkholderia cepacia (strain R1808)) protein is Pyrimidine/purine nucleoside phosphorylase.